Reading from the N-terminus, the 323-residue chain is uncharacterized protein (323 aa).

The active-site Proton donor is the Tyr-59. An NADP(+)-binding site is contributed by 198-208 (SPLAQGLLGGK).

Belongs to the aldo/keto reductase family. Aldo/keto reductase 2 subfamily.

This is an uncharacterized protein from Mycobacterium tuberculosis (strain CDC 1551 / Oshkosh).